Here is a 260-residue protein sequence, read N- to C-terminus: UPF0246 protein APL_0602 (260 aa).

Belongs to the UPF0246 family.

The polypeptide is UPF0246 protein APL_0602 (Actinobacillus pleuropneumoniae serotype 5b (strain L20)).